The chain runs to 253 residues: Phosphoadenosine 5'-phosphosulfate reductase (253 aa).

Cys239 functions as the Nucleophile; cysteine thiosulfonate intermediate in the catalytic mechanism.

This sequence belongs to the PAPS reductase family. CysH subfamily.

It localises to the cytoplasm. The enzyme catalyses [thioredoxin]-disulfide + sulfite + adenosine 3',5'-bisphosphate + 2 H(+) = [thioredoxin]-dithiol + 3'-phosphoadenylyl sulfate. Its pathway is sulfur metabolism; hydrogen sulfide biosynthesis; sulfite from sulfate: step 3/3. Functionally, catalyzes the formation of sulfite from phosphoadenosine 5'-phosphosulfate (PAPS) using thioredoxin as an electron donor. The polypeptide is Phosphoadenosine 5'-phosphosulfate reductase (Aliivibrio fischeri (strain MJ11) (Vibrio fischeri)).